The primary structure comprises 120 residues: NAD(P)H-quinone oxidoreductase subunit 3, chloroplastic (120 aa).

Transmembrane regions (helical) follow at residues 14–34 (LIIS…LAPI), 64–84 (MFAL…PWAM), and 88–108 (ILGV…IVGL).

This sequence belongs to the complex I subunit 3 family. In terms of assembly, NDH is composed of at least 16 different subunits, 5 of which are encoded in the nucleus.

It localises to the plastid. Its subcellular location is the chloroplast thylakoid membrane. It carries out the reaction a plastoquinone + NADH + (n+1) H(+)(in) = a plastoquinol + NAD(+) + n H(+)(out). It catalyses the reaction a plastoquinone + NADPH + (n+1) H(+)(in) = a plastoquinol + NADP(+) + n H(+)(out). Its function is as follows. NDH shuttles electrons from NAD(P)H:plastoquinone, via FMN and iron-sulfur (Fe-S) centers, to quinones in the photosynthetic chain and possibly in a chloroplast respiratory chain. The immediate electron acceptor for the enzyme in this species is believed to be plastoquinone. Couples the redox reaction to proton translocation, and thus conserves the redox energy in a proton gradient. In Coffea arabica (Arabian coffee), this protein is NAD(P)H-quinone oxidoreductase subunit 3, chloroplastic.